Consider the following 814-residue polypeptide: Syn-copalyl diphosphate synthase TPS3, chloroplastic (814 aa).

The N-terminal 52 residues, 1–52, are a transit peptide targeting the chloroplast; that stretch reads MCSLSTLSPNFSNAYGSKSVSSTASRFPCWQRSNETWKTQSREVIHWTYVVR. K248 is a binding site for substrate. The Mg(2+) site is built by D386 and D388. Residues 386–389 carry the DXDD motif motif; it reads DIDD. K472 lines the substrate pocket.

Belongs to the terpene synthase family. Mg(2+) is required as a cofactor. As to expression, mostly expressed in trichomes of leaves and fruits.

Its subcellular location is the plastid. It is found in the chloroplast. It carries out the reaction (2E,6E,10E)-geranylgeranyl diphosphate = 9alpha-copalyl diphosphate. It participates in secondary metabolite biosynthesis; terpenoid biosynthesis. Its function is as follows. Involved in the biosynthesis of labdane-type diterpenoid including cleroda-dienols, and peregrinol lactones and furan derivatives, dopaminergic diterpenoids that can bind to dopamine receptors in the human pituitary gland, have probably ability to lower prolactin levels, and are used to treat menstrual cycle disorders (e.g. premenstrual syndrome and mastodynia). Terpene synthase that produces syn-copalyl diphosophate from geranylgeranyl diphosphate (GGPP). The chain is Syn-copalyl diphosphate synthase TPS3, chloroplastic from Vitex agnus-castus (Chaste tree).